Reading from the N-terminus, the 236-residue chain is 2-C-methyl-D-erythritol 4-phosphate cytidylyltransferase (236 aa).

This sequence belongs to the IspD/TarI cytidylyltransferase family. IspD subfamily. In terms of assembly, homodimer.

It carries out the reaction 2-C-methyl-D-erythritol 4-phosphate + CTP + H(+) = 4-CDP-2-C-methyl-D-erythritol + diphosphate. The protein operates within isoprenoid biosynthesis; isopentenyl diphosphate biosynthesis via DXP pathway; isopentenyl diphosphate from 1-deoxy-D-xylulose 5-phosphate: step 2/6. Catalyzes the formation of 4-diphosphocytidyl-2-C-methyl-D-erythritol from CTP and 2-C-methyl-D-erythritol 4-phosphate (MEP). This is 2-C-methyl-D-erythritol 4-phosphate cytidylyltransferase from Escherichia coli O157:H7.